An 85-amino-acid chain; its full sequence is MARGSSWSCSGSSSSFSLCCFFFGSSDGLFPTPEAIPKGLKPTGAPNLLAPDSLAILSLNAALRFSSLSSSSFSSSLSPSLSSWP.

This is an uncharacterized protein from Saccharomyces cerevisiae (strain ATCC 204508 / S288c) (Baker's yeast).